A 340-amino-acid polypeptide reads, in one-letter code: Dihydroorotate dehydrogenase (quinone) (340 aa).

FMN contacts are provided by residues 62–66 (AGLDK) and Thr86. Lys66 is a binding site for substrate. Substrate is bound at residue 111–115 (NRMGF). Positions 139 and 172 each coordinate FMN. Residue Asn172 coordinates substrate. The active-site Nucleophile is the Ser175. Residue Asn177 coordinates substrate. Positions 217 and 245 each coordinate FMN. 246-247 (NT) serves as a coordination point for substrate. FMN-binding positions include Gly268, Gly297, and 318 to 319 (YS).

This sequence belongs to the dihydroorotate dehydrogenase family. Type 2 subfamily. As to quaternary structure, monomer. Requires FMN as cofactor.

Its subcellular location is the cell membrane. The enzyme catalyses (S)-dihydroorotate + a quinone = orotate + a quinol. Its pathway is pyrimidine metabolism; UMP biosynthesis via de novo pathway; orotate from (S)-dihydroorotate (quinone route): step 1/1. Catalyzes the conversion of dihydroorotate to orotate with quinone as electron acceptor. In Alkalilimnicola ehrlichii (strain ATCC BAA-1101 / DSM 17681 / MLHE-1), this protein is Dihydroorotate dehydrogenase (quinone).